The following is a 354-amino-acid chain: Homeobox-leucine zipper protein HOX27 (354 aa).

The tract at residues 98-175 (SVAAGAPGME…DDEGASARKK (78 aa)) is disordered. Residues 148–157 (QGGGGGGGGE) show a composition bias toward gly residues. Positions 171–230 (SARKKLRLSKEQSAFLEESFKEHSTLNPKQKVALAKQLNLRPRQVEVWFQNRRARTKLKQ) form a DNA-binding region, homeobox. The leucine-zipper stretch occupies residues 229-273 (KQTEVDCEYLKRCCETLTEENRRLHKELAELRALKTARPFYMHLP). The tract at residues 294–323 (STSAPAAATSPAAAPTAAARTAVASPEPHR) is disordered.

Belongs to the HD-ZIP homeobox family. Class II subfamily. As to expression, expressed in seedlings, roots, stems, leaf sheaths and blades and panicles.

Its subcellular location is the nucleus. Its function is as follows. Probable transcription factor. The chain is Homeobox-leucine zipper protein HOX27 (HOX27) from Oryza sativa subsp. japonica (Rice).